We begin with the raw amino-acid sequence, 319 residues long: Myoblast determination protein 1 (319 aa).

Met-1 is covalently cross-linked (Peptide (Met-Gly) (interchain with G-Cter in ubiquitin)). Residue Lys-104 is modified to N6-methyllysine; by EHMT2. One can recognise a bHLH domain in the interval 109–160; sequence DRRKAATMRERRRLSKVNEAFETLKRCTSSNPNQRLPKVEILRNAIRYIEGL. Disordered stretches follow at residues 174–222 and 267–319; these read AAAA…GARR and PALL…YQVL. Residues 197 to 207 show a composition bias toward polar residues; the sequence is SDASSPRSNCS. Positions 267 to 276 are enriched in low complexity; the sequence is PALLLADAPP.

In terms of assembly, efficient DNA binding requires dimerization with another bHLH protein. Seems to form active heterodimers with ITF-2. Interacts with SUV39H1. Interacts with DDX5. Interacts with CHD2. Interacts with TSC22D3. Interacts with SETD3. Interacts with P-TEFB complex; promotes the transcriptional activity of MYOD1 through its CDK9-mediated phosphorylation. Interacts with CSRP3. Interacts with NUPR1. Post-translationally, phosphorylated by CDK9. This phosphorylation promotes its function in muscle differentiation. Acetylated by a complex containing EP300 and PCAF. The acetylation is essential to activate target genes. Conversely, its deacetylation by SIRT1 inhibits its function. In terms of processing, ubiquitinated on the N-terminus; which is required for proteasomal degradation. Post-translationally, methylation at Lys-104 by EHMT2/G9a inhibits myogenic activity.

The protein localises to the nucleus. Functionally, acts as a transcriptional activator that promotes transcription of muscle-specific target genes and plays a role in muscle differentiation. Together with MYF5 and MYOG, co-occupies muscle-specific gene promoter core region during myogenesis. Induces fibroblasts to differentiate into myoblasts. Interacts with and is inhibited by the twist protein. This interaction probably involves the basic domains of both proteins. The polypeptide is Myoblast determination protein 1 (MYOD1) (Ovis aries (Sheep)).